The following is a 33-amino-acid chain: Cytochrome b6-f complex subunit 8 (33 aa).

A helical membrane pass occupies residues 2–22 (LFTVAWASLAAMFSFSIAMVV).

This sequence belongs to the PetN family. As to quaternary structure, the 4 large subunits of the cytochrome b6-f complex are cytochrome b6, subunit IV (17 kDa polypeptide, PetD), cytochrome f and the Rieske protein, while the 4 small subunits are PetG, PetL, PetM and PetN. The complex functions as a dimer.

The protein localises to the cellular thylakoid membrane. Component of the cytochrome b6-f complex, which mediates electron transfer between photosystem II (PSII) and photosystem I (PSI), cyclic electron flow around PSI, and state transitions. The protein is Cytochrome b6-f complex subunit 8 of Synechococcus sp. (strain CC9902).